A 382-amino-acid chain; its full sequence is MAINLFTSESVSEGHPDKIADQISDAVLDEILKQDPKARVACETYVKTGMALVGGEITTSAWVDIENLTRQVICDIGYTHSDMGFDAHSCAVLNAIGKQSPDINQGVDRANPLEQGAGDQGIMFGYATNETEVLMPAPITYAHRLMEQQAKVRKSGKLDWLRPDAKSQLTFIYEDNKIKGIDTVVLSTQHAEHVDQKTVFEGVMEEIIKPILPSEWLSQNTKYFINPTGRFVIGGPMGDCGLTGRKIIVDTYGGAARHGGGAFSGKDPSKVDRSAAYAARYVAKNIVAAGLADRCEIQLSYAIGIAEPTSIMVETFGTGKVSNEVFVRLVREHFDLRPYGLIKMLDLIRPIYRETAAYGHFGREHFPWEKTDKAEALKSALR.

H15 is a binding site for ATP. D17 is a binding site for Mg(2+). E43 is a K(+) binding site. Residues E56 and Q99 each coordinate L-methionine. Residues 99-109 (QSPDINQGVDR) form a flexible loop region. ATP contacts are provided by residues 164-166 (DAK), 230-231 (RF), D239, 245-246 (RK), A262, and K266. D239 lines the L-methionine pocket. An L-methionine-binding site is contributed by K270.

The protein belongs to the AdoMet synthase family. In terms of assembly, homotetramer; dimer of dimers. Requires Mg(2+) as cofactor. The cofactor is K(+).

It is found in the cytoplasm. The catalysed reaction is L-methionine + ATP + H2O = S-adenosyl-L-methionine + phosphate + diphosphate. The protein operates within amino-acid biosynthesis; S-adenosyl-L-methionine biosynthesis; S-adenosyl-L-methionine from L-methionine: step 1/1. In terms of biological role, catalyzes the formation of S-adenosylmethionine (AdoMet) from methionine and ATP. The overall synthetic reaction is composed of two sequential steps, AdoMet formation and the subsequent tripolyphosphate hydrolysis which occurs prior to release of AdoMet from the enzyme. The protein is S-adenosylmethionine synthase of Glaesserella parasuis serovar 5 (strain SH0165) (Haemophilus parasuis).